Reading from the N-terminus, the 515-residue chain is Maturase K (515 aa).

Belongs to the intron maturase 2 family. MatK subfamily.

Its subcellular location is the plastid. It is found in the chloroplast. Its function is as follows. Usually encoded in the trnK tRNA gene intron. Probably assists in splicing its own and other chloroplast group II introns. This is Maturase K from Pinus pinea (Italian stone pine).